A 371-amino-acid polypeptide reads, in one-letter code: Maltose/maltodextrin import ATP-binding protein MalK (371 aa).

An ABC transporter domain is found at 4–234 (VTLKNVCKAY…PENRFVAGFI (231 aa)). An ATP-binding site is contributed by 36 to 43 (GPSGCGKS).

The protein belongs to the ABC transporter superfamily. Maltooligosaccharide importer (TC 3.A.1.1.1) family. The complex is composed of two ATP-binding proteins (MalK), two transmembrane proteins (MalG and MalK) and a solute-binding protein (MalE).

The protein localises to the cell inner membrane. It carries out the reaction D-maltose(out) + ATP + H2O = D-maltose(in) + ADP + phosphate + H(+). Its function is as follows. Part of the ABC transporter complex MalEFGK involved in maltose/maltodextrin import. Responsible for energy coupling to the transport system. The chain is Maltose/maltodextrin import ATP-binding protein MalK from Vibrio vulnificus (strain CMCP6).